Consider the following 162-residue polypeptide: Caveolin-2 (162 aa).

Residues 1 to 86 (MGLETEKADV…FEISKYVIYK (86 aa)) are Cytoplasmic-facing. The residue at position 19 (tyrosine 19) is a Phosphotyrosine; by SRC. Phosphoserine is present on residues serine 20 and serine 23. At tyrosine 27 the chain carries Phosphotyrosine; by SRC. Phosphoserine is present on serine 36. The helical intramembrane region spans 87-107 (FLTVFLAIPLAFAAGIIFATL). Residues 108-162 (SCLHIWIIMPFVKTCLMVLPSVQTIWRSVTDAVIAPLCTSVGRVFSSVSLQLSRD) lie on the Cytoplasmic side of the membrane.

It belongs to the caveolin family. In terms of assembly, monomer or homodimer. Interacts with CAV1; the interaction forms a stable heterooligomeric complex that is required for targeting to lipid rafts and for caveolae formation. Tyrosine phosphorylated forms do not form heterooligomers with the Tyr-19-phosphorylated form existing as a monomer or dimer, and the Tyr-27-form as a monomer only. Interacts (tyrosine phosphorylated form) with the SH2 domain-containing proteins, RASA1, NCK1 and SRC. Interacts (tyrosine phosphorylated form) with INSR, the interaction (Tyr-27-phosphorylated form) is increased on insulin stimulation. Interacts (Tyr-19 phosphorylated form) with MAPK1 (phosphorylated form); the interaction, promoted by insulin, leads to nuclear location and MAPK1 activation. Interacts with STAT3; the interaction is increased on insulin-induced tyrosine phosphorylation leading to STAT activation. Post-translationally, phosphorylated on serine and tyrosine residues. CAV1 promotes phosphorylation on Ser-23 which then targets the complex to the plasma membrane, lipid rafts and caveolae. Phosphorylation on Ser-36 appears to modulate mitosis in endothelial cells. Phosphorylation on both Tyr-19 and Tyr-27 is required for insulin-induced 'Ser-727' phosphorylation of STAT3 and its activation. Phosphorylation on Tyr-19 is required for insulin-induced phosphorylation of MAPK1 and DNA binding of STAT3. Tyrosine phosphorylation is induced by both EGF and insulin (By. similarity).

Its subcellular location is the nucleus. It localises to the cytoplasm. The protein localises to the golgi apparatus membrane. The protein resides in the cell membrane. It is found in the membrane. Its subcellular location is the caveola. In terms of biological role, may act as a scaffolding protein within caveolar membranes. Interacts directly with G-protein alpha subunits and can functionally regulate their activity. Acts as an accessory protein in conjunction with CAV1 in targeting to lipid rafts and driving caveolae formation. The Ser-36 phosphorylated form has a role in modulating mitosis in endothelial cells. Positive regulator of cellular mitogenesis of the MAPK signaling pathway. Required for the insulin-stimulated nuclear translocation and activation of MAPK1 and STAT3, and the subsequent regulation of cell cycle progression. The polypeptide is Caveolin-2 (CAV2) (Carollia perspicillata (Seba's short-tailed bat)).